The chain runs to 370 residues: Probable endopolygalacturonase A (370 aa).

A signal peptide spans 1–19; sequence MPSAKPLFCLATLAGAALA. Residues 20–32 constitute a propeptide that is removed on maturation; that stretch reads APAPSRVSDFTKR. A disulfide bridge connects residues C35 and C50. PbH1 repeat units lie at residues 162-192, 193-214, 215-235, 244-265, 273-295, and 307-352; these read SDNL…DISE, STYI…AINS, GENI…SIGS, VKNV…RIKT, VEDI…VIEQ, and SNGV…DITG. The active-site Proton donor is the D207. A disulfide bridge connects residues C209 and C225. Residue H229 is part of the active site. An N-linked (GlcNAc...) asparagine glycan is attached at N246. 2 disulfides stabilise this stretch: C335–C340 and C359–C368.

This sequence belongs to the glycosyl hydrolase 28 family.

It localises to the secreted. It catalyses the reaction (1,4-alpha-D-galacturonosyl)n+m + H2O = (1,4-alpha-D-galacturonosyl)n + (1,4-alpha-D-galacturonosyl)m.. Functionally, involved in maceration and soft-rotting of plant tissue. Hydrolyzes the 1,4-alpha glycosidic bonds of de-esterified pectate in the smooth region of the plant cell wall. This is Probable endopolygalacturonase A (pgaA) from Aspergillus niger (strain ATCC MYA-4892 / CBS 513.88 / FGSC A1513).